Here is a 333-residue protein sequence, read N- to C-terminus: Cell division protein FtsQ (333 aa).

The disordered stretch occupies residues 1 to 99; the sequence is MTGTGPHGDP…ARREAKRRAV (99 aa). The Cytoplasmic segment spans residues 1–118; the sequence is MTGTGPHGDP…VPRNTIRGLK (118 aa). Residues 11-22 show a composition bias toward acidic residues; it reads AEDPAGPDDTAA. Positions 44–57 are enriched in low complexity; the sequence is TTETTAQTGTTAEA. Positions 73–92 are enriched in basic and acidic residues; sequence ERAERRAARDRAMAIEQARR. The chain crosses the membrane as a helical span at residues 119 to 139; that stretch reads VLMWAALVSVLAVALGLLLYF. Topologically, residues 140–333 are extracellular; the sequence is TPIMSARNVE…VSSPDLPTVK (194 aa). The POTRA domain maps to 143–211; that stretch reads MSARNVEVSG…STLKISIVER (69 aa).

Belongs to the FtsQ/DivIB family. FtsQ subfamily.

It is found in the cell membrane. In terms of biological role, essential cell division protein. This is Cell division protein FtsQ from Mycolicibacterium smegmatis (strain ATCC 700084 / mc(2)155) (Mycobacterium smegmatis).